The following is a 151-amino-acid chain: Transcriptional regulator MraZ (151 aa).

2 consecutive SpoVT-AbrB domains span residues Ala-5–Glu-52 and Ala-81–Ala-124.

Belongs to the MraZ family. In terms of assembly, forms oligomers.

It localises to the cytoplasm. It is found in the nucleoid. In Pseudomonas savastanoi pv. phaseolicola (strain 1448A / Race 6) (Pseudomonas syringae pv. phaseolicola (strain 1448A / Race 6)), this protein is Transcriptional regulator MraZ.